The chain runs to 528 residues: Cytochrome P450 monooxygenase polB (528 aa).

The chain crosses the membrane as a helical span at residues 3 to 23 (SFFLVCPVAFLGFTICYLVYV). Cys-473 lines the heme pocket.

It belongs to the cytochrome P450 family. It depends on heme as a cofactor.

It is found in the membrane. It catalyses the reaction 4beta-carboxyl motiol + reduced [NADPH--hemoprotein reductase] + O2 = 2alpha-hydroxyl, 4beta-carboxyl motiol + oxidized [NADPH--hemoprotein reductase] + H2O + H(+). The catalysed reaction is 2-deoxypolytolypin + reduced [NADPH--hemoprotein reductase] + O2 = polytolypin + oxidized [NADPH--hemoprotein reductase] + H2O + H(+). It functions in the pathway secondary metabolite biosynthesis; terpenoid biosynthesis. Cytochrome P450 monooxygenase; part of the gene cluster that mediates the biosynthesis of antifungal fernane-type triterpenoid polytolypin. PolB acts as a hydroxylase and installs the 2-alpha-hydroxyl group in polytolypin. Within the pathway, the triterpene cyclase polA first catalyzes the cyclization of 2,3-oxidosqualene to motiol, polC converts the 4-alpha-methyl group of motiol to a carboxyl group, polB is responsible for appending a hydroxyl group at the 2-alpha position and polE is a dual functional P450, which can catalyze the formation of both the 1-beta-hydroxyl group and 10-beta-carboxyl group. The chain is Cytochrome P450 monooxygenase polB from Polytolypa hystricis (strain UAMH7299).